A 366-amino-acid polypeptide reads, in one-letter code: Ribosomal RNA large subunit methyltransferase M (366 aa).

Residues Ser-188, 221–224 (CPGG), Asp-240, Asp-260, and Asp-277 contribute to the S-adenosyl-L-methionine site. Catalysis depends on Lys-306, which acts as the Proton acceptor.

It belongs to the class I-like SAM-binding methyltransferase superfamily. RNA methyltransferase RlmE family. RlmM subfamily. As to quaternary structure, monomer.

It is found in the cytoplasm. It catalyses the reaction cytidine(2498) in 23S rRNA + S-adenosyl-L-methionine = 2'-O-methylcytidine(2498) in 23S rRNA + S-adenosyl-L-homocysteine + H(+). Catalyzes the 2'-O-methylation at nucleotide C2498 in 23S rRNA. This Photorhabdus sp. (strain Az29) protein is Ribosomal RNA large subunit methyltransferase M.